The following is a 452-amino-acid chain: LIM/homeobox protein lim-7 (452 aa).

2 LIM zinc-binding domains span residues 54–116 (AVCA…LFTT) and 117–179 (RCSR…LDNP). The interval 184 to 268 (SVPDYSKLNN…KKKDKQATRV (85 aa)) is disordered. Low complexity-rich tracts occupy residues 192 to 205 (NNNN…SSSN) and 217 to 227 (TLTSLDNNTSS). Residues 265–324 (ATRVRTVLNENQLKILRDCYSINSRPDATLKERLVEMTGLSARVIRVWFQNKRCKDKKRQ) constitute a DNA-binding region (homeobox). An LIM interaction domain (LID) region spans residues 347–376 (GIGPLMVQPATPHIDNTLGGPIDIQHFAQW).

In terms of assembly, interacts (via LID domain) with ceh-14 (via LIM zinc-binding domains 1 and 2). As to expression, expressed in gonadal sheath cells, URA motoneurons, and 10 additional cells near the isthmus and terminal bulb of the pharynx. Expressed in the ALA and BDU cells.

The protein resides in the nucleus. In terms of biological role, probable DNA-binding transcriptional activator. In Caenorhabditis elegans, this protein is LIM/homeobox protein lim-7.